Consider the following 585-residue polypeptide: Frizzled-5 (585 aa).

An N-terminal signal peptide occupies residues 1–26 (MARPDPSAPPSLLLLLLAQLVGRAAA). The Extracellular portion of the chain corresponds to 27–238 (ASKAPVCQEI…ADERTFATFW (212 aa)). Residues 28 to 150 (SKAPVCQEIT…RDAEVLCMDY (123 aa)) form the FZ domain. 5 disulfide bridges follow: cysteine 33-cysteine 94, cysteine 41-cysteine 87, cysteine 78-cysteine 116, cysteine 105-cysteine 147, and cysteine 109-cysteine 133. Asparagine 47 carries N-linked (GlcNAc...) asparagine glycosylation. The N-linked (GlcNAc...) asparagine glycan is linked to asparagine 151. Residues 156 to 179 (TTAPPRPFPAKPTLPGPPGAPASG) form a disordered region. The segment covering 159-175 (PPRPFPAKPTLPGPPGA) has biased composition (pro residues). A helical transmembrane segment spans residues 239–259 (IGLWSVLCFISTSTTVATFLI). The Cytoplasmic segment spans residues 260–270 (DMERFRYPERP). A helical transmembrane segment spans residues 271-291 (IIFLSACYLCVSLGFLVRLVV). Over 292 to 315 (GHASVACSREHNHIHYETTGPALC) the chain is Extracellular. A helical membrane pass occupies residues 316–336 (TIVFLLVYFFGMASSIWWVIL). The Cytoplasmic portion of the chain corresponds to 337–358 (SLTWFLAAGMKWGNEAIAGYAQ). A helical membrane pass occupies residues 359–379 (YFHLAAWLIPSVKSITALALS). Residues 380-402 (SVDGDPVAGICYVGNQNLNSLRG) lie on the Extracellular side of the membrane. A helical transmembrane segment spans residues 403–423 (FVLGPLVLYLLVGTLFLLAGF). Residues 424-449 (VSLFRIRSVIKQGGTKTDKLEKLMIR) lie on the Cytoplasmic side of the membrane. Residues 450-470 (IGIFTLLYTVPASIVVACYLY) form a helical membrane-spanning segment. The Extracellular segment spans residues 471 to 500 (EQHYRESWEAALTCACPGHDTGQPRAKPEY). The chain crosses the membrane as a helical span at residues 501-521 (WVLMLKYFMCLVVGITSGVWI). Residues 522–585 (WSGKTVESWR…YHKQVSLSHV (64 aa)) lie on the Cytoplasmic side of the membrane. A Lys-Thr-X-X-X-Trp motif, mediates interaction with the PDZ domain of Dvl family members motif is present at residues 525–530 (KTVESW). Residues 583-585 (SHV) carry the PDZ-binding motif.

Belongs to the G-protein coupled receptor Fz/Smo family. As to quaternary structure, binding of unsaturated fatty acid molecules (via FZ domain) promotes homodimerization. Interacts with WNT2B. Interacts with WNT3A. Interacts with WNT7A. Interacts with GOPC. In terms of processing, ubiquitinated by RNF43 and ZNRF3, leading to its degradation by the proteasome.

The protein resides in the cell membrane. It is found in the golgi apparatus membrane. Its subcellular location is the synapse. The protein localises to the perikaryon. It localises to the cell projection. The protein resides in the dendrite. It is found in the axon. Functionally, receptor for Wnt proteins. Functions in the canonical Wnt/beta-catenin signaling pathway. In vitro activates WNT2, WNT10B, WNT5A, but not WNT2B or WNT4 signaling. In neurons, activation by WNT7A promotes formation of synapses. May be involved in transduction and intercellular transmission of polarity information during tissue morphogenesis and/or in differentiated tissues. Plays a role in yolk sac angiogenesis and in placental vascularization. Plays a role in ocular development. This Homo sapiens (Human) protein is Frizzled-5 (FZD5).